The chain runs to 145 residues: uncharacterized protein (145 aa).

The first 20 residues, 1 to 20, serve as a signal peptide directing secretion; sequence MKTCTVICCTALVLGLTAYA.

This is an uncharacterized protein from Aedes vexans (Inland floodwater mosquito).